Here is a 154-residue protein sequence, read N- to C-terminus: MRILGIDPGLARVGYGVIDIQDGCQRMLDCGIIQTNSDRSDGDRMVEIAGDLRQLIRIWRPELAAVEKFFFYRSSNTINVVQARGVVVMTLARFKIPMVEFPPMQIKLAVAGFGHAEKDEVLEAVMRELSLEEPPRPDDAADALAVALTAWLQR.

Residues D7, E67, and D139 contribute to the active site. Mg(2+) contacts are provided by D7, E67, and D139.

This sequence belongs to the RuvC family. In terms of assembly, homodimer which binds Holliday junction (HJ) DNA. The HJ becomes 2-fold symmetrical on binding to RuvC with unstacked arms; it has a different conformation from HJ DNA in complex with RuvA. In the full resolvosome a probable DNA-RuvA(4)-RuvB(12)-RuvC(2) complex forms which resolves the HJ. Requires Mg(2+) as cofactor.

Its subcellular location is the cytoplasm. It carries out the reaction Endonucleolytic cleavage at a junction such as a reciprocal single-stranded crossover between two homologous DNA duplexes (Holliday junction).. In terms of biological role, the RuvA-RuvB-RuvC complex processes Holliday junction (HJ) DNA during genetic recombination and DNA repair. Endonuclease that resolves HJ intermediates. Cleaves cruciform DNA by making single-stranded nicks across the HJ at symmetrical positions within the homologous arms, yielding a 5'-phosphate and a 3'-hydroxyl group; requires a central core of homology in the junction. The consensus cleavage sequence is 5'-(A/T)TT(C/G)-3'. Cleavage occurs on the 3'-side of the TT dinucleotide at the point of strand exchange. HJ branch migration catalyzed by RuvA-RuvB allows RuvC to scan DNA until it finds its consensus sequence, where it cleaves and resolves the cruciform DNA. This is Crossover junction endodeoxyribonuclease RuvC from Synechococcus sp. (strain CC9605).